The primary structure comprises 430 residues: Adenylosuccinate synthetase (430 aa).

Residues 12-18 (GDEGKGK) and 40-42 (GHT) each bind GTP. The active-site Proton acceptor is the aspartate 13. Mg(2+) is bound by residues aspartate 13 and glycine 40. IMP contacts are provided by residues 13–16 (DEGK), 38–41 (NAGH), threonine 130, arginine 144, glutamine 224, threonine 239, and arginine 303. Histidine 41 functions as the Proton donor in the catalytic mechanism. 299–305 (VNTGRKR) contacts substrate. Residues arginine 305, 331–333 (KLD), and 413–415 (STS) each bind GTP.

Belongs to the adenylosuccinate synthetase family. Homodimer. Mg(2+) is required as a cofactor.

Its subcellular location is the cytoplasm. It catalyses the reaction IMP + L-aspartate + GTP = N(6)-(1,2-dicarboxyethyl)-AMP + GDP + phosphate + 2 H(+). It participates in purine metabolism; AMP biosynthesis via de novo pathway; AMP from IMP: step 1/2. Its function is as follows. Plays an important role in the de novo pathway of purine nucleotide biosynthesis. Catalyzes the first committed step in the biosynthesis of AMP from IMP. This chain is Adenylosuccinate synthetase, found in Rhodopseudomonas palustris (strain ATCC BAA-98 / CGA009).